Here is a 115-residue protein sequence, read N- to C-terminus: NADH-ubiquinone oxidoreductase chain 3 (115 aa).

Helical transmembrane passes span 4 to 24, 55 to 75, and 83 to 103; these read LTAL…AFWL, FFLV…LLPL, and YINI…LGLA.

It belongs to the complex I subunit 3 family. As to quaternary structure, core subunit of respiratory chain NADH dehydrogenase (Complex I) which is composed of 45 different subunits. Interacts with TMEM186. Interacts with TMEM242.

Its subcellular location is the mitochondrion inner membrane. It catalyses the reaction a ubiquinone + NADH + 5 H(+)(in) = a ubiquinol + NAD(+) + 4 H(+)(out). Core subunit of the mitochondrial membrane respiratory chain NADH dehydrogenase (Complex I) which catalyzes electron transfer from NADH through the respiratory chain, using ubiquinone as an electron acceptor. Essential for the catalytic activity of complex I. In Peromyscus polionotus (Oldfield mouse), this protein is NADH-ubiquinone oxidoreductase chain 3.